We begin with the raw amino-acid sequence, 527 residues long: MDEGTLEAAITAYSAQLQQVESALLAGLDPSQQADLLKLKEDLSQLIELTEASLVSVKKSRLLATLEEDDGLQSLATGTPANGGLDNEFAAFYSEVGEVSGSSSDMREREDEREEEDDGEVEGEVDALSGTKVRAPYRTSWGTLEYHNAMIVGTESCDRNEAQVRVLYVHPTQKSMKPCPFFLEDKCRFADNCRFSHGEVVYVSELREFLESDLTNLQEGSSCLARQDDGIWYSGKITDIDNDFYTVKFDSALLKNVMVEADGVIPPLREDDLPSCSDSEDDDNGEGEAAFPRVLTQEEDWAPSRSSSAFGGWEAHTRGIGSKLMLKMGYEYGKGLGKTSEGRVEPVLAVVLPKGKSLDQCAELTARKTQRKVAKGKDGQQVSRNKRTRKARAHNTGGCHNVFDFLNRKLGNGDANPEAGGTCGPPPSHTPSSQGAGVEAYKGGKSTKRNLNVKLFQAAERVAQTEREIQRLTESLSRRTGRDSSMVTHLEEKLSAARSLLVQQKAQELSAQRENRKADTHKKMTEF.

The interval 97 to 126 (GEVSGSSSDMREREDEREEEDDGEVEGEVD) is disordered. Acidic residues predominate over residues 111–125 (DEREEEDDGEVEGEV). The C3H1-type zinc-finger motif lies at 173–200 (QKSMKPCPFFLEDKCRFADNCRFSHGEV). Positions 268 to 312 (LREDDLPSCSDSEDDDNGEGEAAFPRVLTQEEDWAPSRSSSAFGG) are disordered. The G-patch domain occupies 317 to 363 (TRGIGSKLMLKMGYEYGKGLGKTSEGRVEPVLAVVLPKGKSLDQCAE). Disordered stretches follow at residues 369–396 (TQRKVAKGKDGQQVSRNKRTRKARAHNT), 410–444 (LGNGDANPEAGGTCGPPPSHTPSSQGAGVEAYKGG), and 505–527 (KAQELSAQRENRKADTHKKMTEF). The span at 384–393 (RNKRTRKARA) shows a compositional bias: basic residues. The span at 511-527 (AQRENRKADTHKKMTEF) shows a compositional bias: basic and acidic residues.

The protein resides in the nucleus. Its function is as follows. Transcription repressor that specifically binds the 5'-GGAG[GA]A[GA]A-3' consensus sequence. Represses transcription by recruiting the chromatin multiprotein complex NuRD to target promoters. Negatively regulates expression of EGFR, a gene involved in cell proliferation, survival and migration. In Salmo salar (Atlantic salmon), this protein is Zinc finger CCCH-type with G patch domain-containing protein (zgpat).